Reading from the N-terminus, the 97-residue chain is Aspartyl/glutamyl-tRNA(Asn/Gln) amidotransferase subunit C (97 aa).

The protein belongs to the GatC family. As to quaternary structure, heterotrimer of A, B and C subunits.

It carries out the reaction L-glutamyl-tRNA(Gln) + L-glutamine + ATP + H2O = L-glutaminyl-tRNA(Gln) + L-glutamate + ADP + phosphate + H(+). It catalyses the reaction L-aspartyl-tRNA(Asn) + L-glutamine + ATP + H2O = L-asparaginyl-tRNA(Asn) + L-glutamate + ADP + phosphate + 2 H(+). Its function is as follows. Allows the formation of correctly charged Asn-tRNA(Asn) or Gln-tRNA(Gln) through the transamidation of misacylated Asp-tRNA(Asn) or Glu-tRNA(Gln) in organisms which lack either or both of asparaginyl-tRNA or glutaminyl-tRNA synthetases. The reaction takes place in the presence of glutamine and ATP through an activated phospho-Asp-tRNA(Asn) or phospho-Glu-tRNA(Gln). The sequence is that of Aspartyl/glutamyl-tRNA(Asn/Gln) amidotransferase subunit C from Clostridium botulinum (strain Eklund 17B / Type B).